The chain runs to 198 residues: Large ribosomal subunit protein bL12m (198 aa).

Residues Met1 to Leu36 constitute a mitochondrion transit peptide. A compositionally biased stretch (low complexity) spans Gly106–Glu115. The segment at Gly106–Glu126 is disordered. Residues Lys125, Lys138, Lys142, and Lys144 each carry the N6-acetyllysine modification. At Lys150 the chain carries N6-acetyllysine; alternate. Lys150 bears the N6-succinyllysine; alternate mark. Residue Lys150 forms a Glycyl lysine isopeptide (Lys-Gly) (interchain with G-Cter in ubiquitin) linkage. Lys162 bears the N6-succinyllysine mark. N6-acetyllysine is present on residues Lys163 and Lys173. Lys178 carries the N6-acetyllysine; alternate modification. Lys178 is subject to N6-succinyllysine; alternate. An N6-acetyllysine modification is found at Lys185.

It belongs to the bacterial ribosomal protein bL12 family. In terms of assembly, component of the mitochondrial ribosome large subunit (39S) which comprises a 16S rRNA and about 50 distinct proteins. Interacts with NOA1. In terms of processing, two mature forms are produced by differential two-step proteolytic cleavage. Cleaved by the mitochondrial processing protease to produce the long mature form and subsequently by the mitochondrial intermediate protease to produce the short mature form. In the presence of CUL3, undergoes 'Lys-63'-linked ubiquitination at Lys-150 which results in proteasomal degradation.

It localises to the mitochondrion matrix. Functionally, as a component of the mitochondrial large ribosomal subunit, plays a role in mitochondrial translation. When present in mitochondria as a free protein not associated with the ribosome, associates with mitochondrial RNA polymerase POLRMT to activate transcription. Required for POLRMT stability. The chain is Large ribosomal subunit protein bL12m (MRPL12) from Bos taurus (Bovine).